Consider the following 616-residue polypeptide: Mitochondrial Rho GTPase 2 (616 aa).

The Cytoplasmic segment spans residues 1-590; sequence MKRDVRILLL…HDTELSTASF (590 aa). A Miro 1 domain is found at 2 to 168; sequence KRDVRILLLG…FYYAQKAVLH (167 aa). Gly-16, Lys-17, Thr-18, and Ser-19 together coordinate GTP. Thr-18 contacts Mg(2+). Residue Asp-57 participates in Mg(2+) binding. The GTP site is built by Ser-59, Asn-118, Lys-119, Asp-121, Ala-149, and Lys-150. EF-hand domains follow at residues 184 to 219 and 304 to 339; these read QCKK…CFGN and FGYQ…FPYT. The Ca(2+) site is built by Asp-199, Asn-201, Glu-208, Asp-317, Asp-319, Asp-321, and Glu-328. One can recognise a Miro 2 domain in the interval 416–577; that stretch reads RNVFLCRVIG…YSKLATAAAF (162 aa). Residues Gly-428, Gly-430, Lys-431, Ser-432, and Ala-433 each coordinate GTP. Ser-432 serves as a coordination point for Mg(2+). Residue Glu-474 coordinates Mg(2+). The GTP site is built by Lys-528, Asp-530, and Cys-559. A helical; Anchor for type IV membrane protein membrane pass occupies residues 591-613; the sequence is WLRVALGATVAAVVGFTLYKALL. Residues 614-616 lie on the Mitochondrial intermembrane side of the membrane; that stretch reads RSK.

The protein belongs to the mitochondrial Rho GTPase family. In terms of assembly, homodimer.

It is found in the mitochondrion outer membrane. It catalyses the reaction GTP + H2O = GDP + phosphate + H(+). The catalysed reaction is ATP + H2O = ADP + phosphate + H(+). It carries out the reaction UTP + H2O = UDP + phosphate + H(+). In terms of biological role, atypical mitochondrial nucleoside-triphosphatase (NTPase) involved in mitochondrial trafficking. Probably involved in control of anterograde transport of mitochondria and their subcellular distribution. Can hydrolyze GTP, ATP and UTP. The chain is Mitochondrial Rho GTPase 2 (rhot2) from Xenopus tropicalis (Western clawed frog).